A 102-amino-acid polypeptide reads, in one-letter code: Small ribosomal subunit protein uS10 (102 aa).

The protein belongs to the universal ribosomal protein uS10 family. Part of the 30S ribosomal subunit.

Its function is as follows. Involved in the binding of tRNA to the ribosomes. The polypeptide is Small ribosomal subunit protein uS10 (Acidithiobacillus ferrooxidans (strain ATCC 53993 / BNL-5-31) (Leptospirillum ferrooxidans (ATCC 53993))).